Consider the following 363-residue polypeptide: MAGNSIGQLFRVTTCGESHGVGLMAIVDGVPPGLALTEEDLQKDLDRRKPGTSKFATQRKEPDQVEIISGVFEGKTTGTPIGLLIRNTDQKSKDYGNIAQTFRPGHADYTYTQKYGFRDYRGGGRSSARETAMRVAAGAIAKKYLAEKFGILIRGHVTQIGNEVAEKLDWNEVPNNPFFCGDVDAVPRFEALVKSLREQGTSCGAKLEILAEKVPVGWGEPVFDRLDADIAHAMMSINAVKGVEIGDGFAVAGQFGHETRDELTSHGFLANHAGGILGGISSGQTIRVAIALKPTASITTPGKTINLNREDTDVLTKGRHDPCVGVRATPIAEAMLAIVLMDHFLRHRAQNADVVPPFVPIEP.

Arg-48 provides a ligand contact to NADP(+). FMN is bound by residues 125-127, 238-239, Gly-278, 293-297, and Arg-319; these read RSS, NA, and KPTAS.

The protein belongs to the chorismate synthase family. As to quaternary structure, homotetramer. FMNH2 serves as cofactor.

It carries out the reaction 5-O-(1-carboxyvinyl)-3-phosphoshikimate = chorismate + phosphate. The protein operates within metabolic intermediate biosynthesis; chorismate biosynthesis; chorismate from D-erythrose 4-phosphate and phosphoenolpyruvate: step 7/7. Catalyzes the anti-1,4-elimination of the C-3 phosphate and the C-6 proR hydrogen from 5-enolpyruvylshikimate-3-phosphate (EPSP) to yield chorismate, which is the branch point compound that serves as the starting substrate for the three terminal pathways of aromatic amino acid biosynthesis. This reaction introduces a second double bond into the aromatic ring system. This chain is Chorismate synthase, found in Acinetobacter baumannii (strain SDF).